Reading from the N-terminus, the 198-residue chain is Peptidyl-tRNA hydrolase (198 aa).

TRNA is bound at residue Tyr-18. The Proton acceptor role is filled by His-23. The tRNA site is built by Phe-69, Asn-71, and Asn-117.

This sequence belongs to the PTH family. In terms of assembly, monomer.

The protein resides in the cytoplasm. It carries out the reaction an N-acyl-L-alpha-aminoacyl-tRNA + H2O = an N-acyl-L-amino acid + a tRNA + H(+). In terms of biological role, hydrolyzes ribosome-free peptidyl-tRNAs (with 1 or more amino acids incorporated), which drop off the ribosome during protein synthesis, or as a result of ribosome stalling. Its function is as follows. Catalyzes the release of premature peptidyl moieties from peptidyl-tRNA molecules trapped in stalled 50S ribosomal subunits, and thus maintains levels of free tRNAs and 50S ribosomes. In Idiomarina loihiensis (strain ATCC BAA-735 / DSM 15497 / L2-TR), this protein is Peptidyl-tRNA hydrolase.